The chain runs to 169 residues: Peptide deformylase (169 aa).

Residues cysteine 91 and histidine 133 each coordinate Fe cation. Glutamate 134 is an active-site residue. Histidine 137 contacts Fe cation.

This sequence belongs to the polypeptide deformylase family. Requires Fe(2+) as cofactor.

The enzyme catalyses N-terminal N-formyl-L-methionyl-[peptide] + H2O = N-terminal L-methionyl-[peptide] + formate. Functionally, removes the formyl group from the N-terminal Met of newly synthesized proteins. Requires at least a dipeptide for an efficient rate of reaction. N-terminal L-methionine is a prerequisite for activity but the enzyme has broad specificity at other positions. The sequence is that of Peptide deformylase from Serratia proteamaculans (strain 568).